A 147-amino-acid polypeptide reads, in one-letter code: Myoglobin (147 aa).

The Globin domain occupies 2-141 (ADFDMVLKCW…IIADMEADYK (140 aa)). Position 60 (His-60) interacts with nitrite. His-60 contacts O2. Position 89 (His-89) interacts with heme b.

This sequence belongs to the globin family. Monomeric.

It localises to the cytoplasm. The protein localises to the sarcoplasm. The enzyme catalyses Fe(III)-heme b-[protein] + nitric oxide + H2O = Fe(II)-heme b-[protein] + nitrite + 2 H(+). It carries out the reaction H2O2 + AH2 = A + 2 H2O. Its function is as follows. Monomeric heme protein which primary function is to store oxygen and facilitate its diffusion within muscle tissues. Reversibly binds oxygen through a pentacoordinated heme iron and enables its timely and efficient release as needed during periods of heightened demand. Depending on the oxidative conditions of tissues and cells, and in addition to its ability to bind oxygen, it also has a nitrite reductase activity whereby it regulates the production of bioactive nitric oxide. Under stress conditions, like hypoxia and anoxia, it also protects cells against reactive oxygen species thanks to its pseudoperoxidase activity. The chain is Myoglobin (mb) from Notothenia neglecta (Yellowbelly rockcod).